A 131-amino-acid polypeptide reads, in one-letter code: Actin-associated protein FAM107A (131 aa).

Positions 57–77 (VLEHRRRNQLIKKKEEELEAK) form a coiled coil. The Nuclear localization signal signature appears at 61-71 (RRRNQLIKKKE).

In terms of assembly, interacts with ACTB. Interacts with COMMD1; this interaction stabilizes COMMD1 in the nucleus. Interacts with MAP1A. Interacts with PRDX1. Interacts with F-actin.

The protein localises to the nucleus. It is found in the cytoplasm. Its subcellular location is the cytoskeleton. It localises to the stress fiber. The protein resides in the cell junction. The protein localises to the focal adhesion. It is found in the cell projection. Its subcellular location is the ruffle membrane. It localises to the synapse. Functionally, stress-inducible actin-binding protein that plays a role in synaptic and cognitive functions by modulating actin filamentous (F-actin) dynamics. Mediates polymerization of globular actin to F-actin. Also binds to, stabilizes and bundles F-actin. Involved in synaptic function by regulating neurite outgrowth in an actin-dependent manner and for the acquisition of hippocampus-dependent cognitive function, such as learning and long-term memory. Plays a role in the actin and microtubule cytoskeleton organization; negatively regulates focal adhesion (FA) assembly promoting malignant glial cell migration in an actin-, microtubule- and MAP1A-dependent manner. Also involved in neuroblastoma G1/S phase cell cycle progression and cell proliferation inhibition by stimulating ubiquitination of NF-kappa-B subunit RELA and NF-kappa-B degradation in a COMMD1- and actin-dependent manner. May play a role in tumor development. This Rattus norvegicus (Rat) protein is Actin-associated protein FAM107A.